The following is a 65-amino-acid chain: Large ribosomal subunit protein uL29 (65 aa).

This sequence belongs to the universal ribosomal protein uL29 family.

This is Large ribosomal subunit protein uL29 from Dehalococcoides mccartyi (strain ATCC BAA-2100 / JCM 16839 / KCTC 5957 / BAV1).